The following is a 261-amino-acid chain: Cytochrome c oxidase subunit 3 (261 aa).

Residues 1–15 (MAHQAHAYHMVDPSP) lie on the Mitochondrial matrix side of the membrane. The chain crosses the membrane as a helical span at residues 16–34 (WPLTGAVAALLLTSGLAVW). Residues 35 to 40 (FHFKSL) lie on the Mitochondrial intermembrane side of the membrane. Residues 41–66 (TLLAMGLLLMILTMIQWWRDIIREGT) form a helical membrane-spanning segment. Residues 67–72 (FQGHHT) are Mitochondrial matrix-facing. Residues 73–105 (PPVQKGLRYGMILFITSEVFFFLGFFWAFYHSS) form a helical membrane-spanning segment. At 106-128 (LAPTPELGGIWPPTGITPLDPFE) the chain is on the mitochondrial intermembrane side. The helical transmembrane segment at 129-152 (VPLLNTAVLLASGVTVTWTHHSLM) threads the bilayer. Topologically, residues 153–155 (EGK) are mitochondrial matrix. The chain crosses the membrane as a helical span at residues 156–183 (RTEATQALTLTILLGLYFTALQAMEYYE). The Mitochondrial intermembrane portion of the chain corresponds to 184 to 190 (APFTIAD). A helical membrane pass occupies residues 191-223 (GVYGTTFFVATGFHGLHVIIGSTFLAGCLLRQI). The Mitochondrial matrix portion of the chain corresponds to 224–232 (LYHFTSSHH). Residues 233 to 256 (FGFEAAAWYWHFVDVVWLFLYVSI) form a helical membrane-spanning segment. Residues 257–261 (YWWGS) are Mitochondrial intermembrane-facing.

It belongs to the cytochrome c oxidase subunit 3 family. Component of the cytochrome c oxidase (complex IV, CIV), a multisubunit enzyme composed of 14 subunits. The complex is composed of a catalytic core of 3 subunits MT-CO1, MT-CO2 and MT-CO3, encoded in the mitochondrial DNA, and 11 supernumerary subunits COX4I, COX5A, COX5B, COX6A, COX6B, COX6C, COX7A, COX7B, COX7C, COX8 and NDUFA4, which are encoded in the nuclear genome. The complex exists as a monomer or a dimer and forms supercomplexes (SCs) in the inner mitochondrial membrane with NADH-ubiquinone oxidoreductase (complex I, CI) and ubiquinol-cytochrome c oxidoreductase (cytochrome b-c1 complex, complex III, CIII), resulting in different assemblies (supercomplex SCI(1)III(2)IV(1) and megacomplex MCI(2)III(2)IV(2)).

The protein localises to the mitochondrion inner membrane. The enzyme catalyses 4 Fe(II)-[cytochrome c] + O2 + 8 H(+)(in) = 4 Fe(III)-[cytochrome c] + 2 H2O + 4 H(+)(out). Functionally, component of the cytochrome c oxidase, the last enzyme in the mitochondrial electron transport chain which drives oxidative phosphorylation. The respiratory chain contains 3 multisubunit complexes succinate dehydrogenase (complex II, CII), ubiquinol-cytochrome c oxidoreductase (cytochrome b-c1 complex, complex III, CIII) and cytochrome c oxidase (complex IV, CIV), that cooperate to transfer electrons derived from NADH and succinate to molecular oxygen, creating an electrochemical gradient over the inner membrane that drives transmembrane transport and the ATP synthase. Cytochrome c oxidase is the component of the respiratory chain that catalyzes the reduction of oxygen to water. Electrons originating from reduced cytochrome c in the intermembrane space (IMS) are transferred via the dinuclear copper A center (CU(A)) of subunit 2 and heme A of subunit 1 to the active site in subunit 1, a binuclear center (BNC) formed by heme A3 and copper B (CU(B)). The BNC reduces molecular oxygen to 2 water molecules using 4 electrons from cytochrome c in the IMS and 4 protons from the mitochondrial matrix. The sequence is that of Cytochrome c oxidase subunit 3 (mt-co3) from Polypterus ornatipinnis (Ornate bichir).